The chain runs to 364 residues: Aminomethyltransferase (364 aa).

The protein belongs to the GcvT family. In terms of assembly, the glycine cleavage system is composed of four proteins: P, T, L and H.

The catalysed reaction is N(6)-[(R)-S(8)-aminomethyldihydrolipoyl]-L-lysyl-[protein] + (6S)-5,6,7,8-tetrahydrofolate = N(6)-[(R)-dihydrolipoyl]-L-lysyl-[protein] + (6R)-5,10-methylene-5,6,7,8-tetrahydrofolate + NH4(+). In terms of biological role, the glycine cleavage system catalyzes the degradation of glycine. The polypeptide is Aminomethyltransferase (Shewanella baltica (strain OS155 / ATCC BAA-1091)).